Consider the following 588-residue polypeptide: Outer membrane transporter CdiB (588 aa).

Residues 104 to 179 (FTVSSIVVSG…GVLHITVMEG (76 aa)) form the POTRA domain.

This sequence belongs to the TPS (TC 1.B.20) family.

It localises to the cell outer membrane. Its function is as follows. Potential outer membrane protein component of a toxin-immunity protein module, which functions as a cellular contact-dependent growth inhibition (CDI) system. CDI modules allow bacteria to communicate with and inhibit the growth of closely related neighboring bacteria in a contact-dependent fashion. This protein may be required for secretion and assembly of the CdiA toxin protein. Inhibitory cells must be in logarithmic (not stationary) phase to inhibit growth of their targets, while the presence of P or S but not type 1 pili protects the target cells against growth inhibition. In terms of biological role, probable member of a two partner secretion pathway (TPS) in which it mediates the secretion of CdiA. The sequence is that of Outer membrane transporter CdiB from Escherichia coli.